An 814-amino-acid chain; its full sequence is Leucine-rich repeat-containing protein 41 (814 aa).

Residues 45–54 (ALFELCGRAV) form an interaction with Elongin BC complex region. Phosphoserine is present on residues serine 155, serine 276, and serine 326. The segment at 265 to 408 (LCGEASRGRA…KKGARTRQGC (144 aa)) is disordered. Threonine 327 bears the Phosphothreonine mark. Low complexity predominate over residues 354–385 (TKRPPSAPATTSSASASSSTSSSKRAPASSAP). Phosphoserine is present on serine 375. The segment covering 389–403 (PLKRFKRAAGKKGAR) has biased composition (basic residues). LRR repeat units follow at residues 489–509 (WVSL…IFRL), 520–532 (AGCR…LSDL), 533–557 (FSPL…VLSI), 615–637 (SGSL…FGLV), 638–661 (LQTL…LADC), 703–730 (NSTL…VFSE), and 733–754 (SSSL…LLEF).

As to quaternary structure, part of a E3 ubiquitin ligase complex with elongin BC complex (ELOB and ELOC), RBX1 and CUL5.

The polypeptide is Leucine-rich repeat-containing protein 41 (LRRC41) (Bos taurus (Bovine)).